Reading from the N-terminus, the 107-residue chain is Nucleoid-associated protein amb4104 (107 aa).

This sequence belongs to the YbaB/EbfC family. Homodimer.

Its subcellular location is the cytoplasm. The protein resides in the nucleoid. Functionally, binds to DNA and alters its conformation. May be involved in regulation of gene expression, nucleoid organization and DNA protection. The chain is Nucleoid-associated protein amb4104 from Paramagnetospirillum magneticum (strain ATCC 700264 / AMB-1) (Magnetospirillum magneticum).